The primary structure comprises 156 residues: S-ribosylhomocysteine lyase (156 aa).

Fe cation-binding residues include histidine 56, histidine 60, and cysteine 123.

This sequence belongs to the LuxS family. As to quaternary structure, homodimer. Fe cation is required as a cofactor.

The catalysed reaction is S-(5-deoxy-D-ribos-5-yl)-L-homocysteine = (S)-4,5-dihydroxypentane-2,3-dione + L-homocysteine. Its function is as follows. Involved in the synthesis of autoinducer 2 (AI-2) which is secreted by bacteria and is used to communicate both the cell density and the metabolic potential of the environment. The regulation of gene expression in response to changes in cell density is called quorum sensing. Catalyzes the transformation of S-ribosylhomocysteine (RHC) to homocysteine (HC) and 4,5-dihydroxy-2,3-pentadione (DPD). The sequence is that of S-ribosylhomocysteine lyase from Staphylococcus aureus (strain bovine RF122 / ET3-1).